Reading from the N-terminus, the 283-residue chain is Small aggregate formation protein (283 aa).

The protein localises to the cytoplasm. Its function is as follows. Knockout of the gene for this protein causes small aggregate formation. May regulate the secretion or processing of a secreted factor that regulates aggregate size. In Dictyostelium discoideum (Social amoeba), this protein is Small aggregate formation protein (smlA).